A 618-amino-acid polypeptide reads, in one-letter code: Matrix metalloproteinase-24 (618 aa).

Residues 1–41 form the signal peptide; that stretch reads MPRSRGGRAAPGQASRWSGWRAPGRLLPLLPALCCLAAAAG. Positions 42 to 128 are excised as a propeptide; that stretch reads AGKPAGADAP…HLSRRRRNKR (87 aa). Residues 42–575 are Extracellular-facing; it reads AGKPAGADAP…IDDVPGSVNA (534 aa). Positions 110 to 117 match the Cysteine switch motif; it reads PRCGVPDH. 2 residues coordinate Zn(2+): C112 and H255. E256 is an active-site residue. The Zn(2+) site is built by H259 and H265. The interval 296 to 352 is disordered; that stretch reads QKIYGPPAEPLEPTRPLPTLPVRRIHSPSERKHERHPRPPRPPLGDRPSTPGAKPNI. Pro residues predominate over residues 302–314; that stretch reads PAEPLEPTRPLPT. 4 Hemopexin repeats span residues 350-398, 399-444, 446-494, and 495-542; these read PNIC…WKGL, PARI…GSCL, REGI…KGIP, and QAPQ…WMGC. Cysteines 353 and 542 form a disulfide. Residues 576-596 form a helical membrane-spanning segment; it reads VAVVVPCTLSLCLLVLLYTIF. The Cytoplasmic segment spans residues 597–618; that stretch reads QFKNKAGPQPVTYYKRPVQEWV. The PDZ-binding motif lies at 616-618; that stretch reads EWV.

This sequence belongs to the peptidase M10A family. Interacts with GRIP1 and GRIP2. Interacts (via PDZ-binding motif) with APBA3 (via PDZ domain). Zn(2+) serves as cofactor. Requires Ca(2+) as cofactor. Cleaved by a furin endopeptidase in the trans-Golgi network. Mainly expressed in neuronal cells of both central and peripheral nervous systems. Expressed by CGRP-containing peptidergic nociceptors in dorsal root ganglia. Expressed in adult neural stem cell and ependymocytes. Expressed at low level in testis.

The protein localises to the cell membrane. It localises to the golgi apparatus. It is found in the trans-Golgi network membrane. Its subcellular location is the secreted. The protein resides in the extracellular space. The protein localises to the extracellular matrix. Its function is as follows. Metalloprotease that mediates cleavage of N-cadherin (CDH2) and acts as a regulator of neuro-immune interactions and neural stem cell quiescence. Involved in cell-cell interactions between nociceptive neurites and mast cells, possibly by mediating cleavage of CDH2, thereby acting as a mediator of peripheral thermal nociception and inflammatory hyperalgesia. Key regulator of neural stem cells quiescence by mediating cleavage of CDH2, affecting CDH2-mediated anchorage of neural stem cells to ependymocytes in the adult subependymal zone, leading to modulate their quiescence. May play a role in axonal growth. Able to activate progelatinase A. May also be a proteoglycanase involved in degradation of proteoglycans, such as dermatan sulfate and chondroitin sulfate proteoglycans. Cleaves partially fibronectin, but not collagen type I, nor laminin. The protein is Matrix metalloproteinase-24 (Mmp24) of Mus musculus (Mouse).